Here is a 280-residue protein sequence, read N- to C-terminus: Energy-coupling factor transporter ATP-binding protein EcfA1 (280 aa).

The region spanning 7-241 (IEVAHLKYEY…GQRLLDLGLD (235 aa)) is the ABC transporter domain. 41–48 (GHNGSGKS) serves as a coordination point for ATP.

It belongs to the ABC transporter superfamily. Energy-coupling factor EcfA family. Forms a stable energy-coupling factor (ECF) transporter complex composed of 2 membrane-embedded substrate-binding proteins (S component), 2 ATP-binding proteins (A component) and 2 transmembrane proteins (T component).

The protein resides in the cell membrane. ATP-binding (A) component of a common energy-coupling factor (ECF) ABC-transporter complex. Unlike classic ABC transporters this ECF transporter provides the energy necessary to transport a number of different substrates. The sequence is that of Energy-coupling factor transporter ATP-binding protein EcfA1 from Latilactobacillus sakei subsp. sakei (strain 23K) (Lactobacillus sakei subsp. sakei).